The primary structure comprises 374 residues: AA14 family lytic polysaccharide monooxygenase B (374 aa).

Positions 1–18 (MIPVFLAAIAVFLPLTSG) are cleaved as a signal peptide. Residues Asn31, Asn49, Asn94, and Asn151 are each glycosylated (N-linked (GlcNAc...) asparagine). Cystine bridges form between Cys85–Cys108, Cys127–Cys154, Cys171–Cys176, Cys178–Cys200, and Cys220–Cys236. Residues Asn235 and Asn315 are each glycosylated (N-linked (GlcNAc...) asparagine). The tract at residues 306–374 (ISNATPAPSN…TQSRKMRYVF (69 aa)) is disordered. The span at 313-344 (PSNGSCSSRPPSSPVSSSAASTTTSRSPRPSA) shows a compositional bias: low complexity.

It belongs to the polysaccharide monooxygenase AA14 family. Cu(2+) is required as a cofactor.

It is found in the secreted. Functionally, lytic polysaccharide monooxygenase (LPMO) that oxidatively cleaves xylan with both C1 and C4 regioselectivity and that specifically targets the protective shield made by heteroxylans that cover cellulose microfibrils in wood. Catalysis by LPMOs requires the reduction of the active-site copper from Cu(II) to Cu(I) by a reducing agent and H(2)O(2) or O(2) as a cosubstrate. Cleavage occurs only when xylans are bound to cellulose and not when they are in solution. Increases the efficiency of wood saccharification through oxidative cleavage of highly refractory xylan-coated cellulose fibers via synergistic relationship with xylan-active enzymes, xylobiohydrolases and cellobiohydrolases. This chain is AA14 family lytic polysaccharide monooxygenase B, found in Pycnoporus cinnabarinus (Cinnabar-red polypore).